The following is a 305-amino-acid chain: Protoheme IX farnesyltransferase (305 aa).

9 helical membrane passes run 31–51, 52–72, 96–118, 123–145, 151–171, 179–199, 225–245, 247–267, and 281–301; these read VISL…YSVH, PFIA…AGAI, VIES…FFMA, LLAS…IWLK, NIVI…AAVS, IILF…LALF, ILIY…IGMN, FIYL…AGSL, and FAYS…TNTI.

The protein belongs to the UbiA prenyltransferase family. Protoheme IX farnesyltransferase subfamily.

Its subcellular location is the cell inner membrane. The catalysed reaction is heme b + (2E,6E)-farnesyl diphosphate + H2O = Fe(II)-heme o + diphosphate. It functions in the pathway porphyrin-containing compound metabolism; heme O biosynthesis; heme O from protoheme: step 1/1. In terms of biological role, converts heme B (protoheme IX) to heme O by substitution of the vinyl group on carbon 2 of heme B porphyrin ring with a hydroxyethyl farnesyl side group. The polypeptide is Protoheme IX farnesyltransferase (Rickettsia massiliae (strain Mtu5)).